Reading from the N-terminus, the 637-residue chain is Phosphomethylpyrimidine synthase (637 aa).

Substrate contacts are provided by residues Asn-242, Met-271, Tyr-300, His-336, 356 to 358 (SRG), 397 to 400 (DGLR), and Glu-436. His-440 provides a ligand contact to Zn(2+). Residue Tyr-463 coordinates substrate. Residue His-504 participates in Zn(2+) binding. [4Fe-4S] cluster-binding residues include Cys-584, Cys-587, and Cys-592.

It belongs to the ThiC family. As to quaternary structure, homodimer. The cofactor is [4Fe-4S] cluster.

It catalyses the reaction 5-amino-1-(5-phospho-beta-D-ribosyl)imidazole + S-adenosyl-L-methionine = 4-amino-2-methyl-5-(phosphooxymethyl)pyrimidine + CO + 5'-deoxyadenosine + formate + L-methionine + 3 H(+). It functions in the pathway cofactor biosynthesis; thiamine diphosphate biosynthesis. In terms of biological role, catalyzes the synthesis of the hydroxymethylpyrimidine phosphate (HMP-P) moiety of thiamine from aminoimidazole ribotide (AIR) in a radical S-adenosyl-L-methionine (SAM)-dependent reaction. This Bordetella bronchiseptica (strain ATCC BAA-588 / NCTC 13252 / RB50) (Alcaligenes bronchisepticus) protein is Phosphomethylpyrimidine synthase.